A 142-amino-acid chain; its full sequence is Ornithine decarboxylase antizyme (142 aa).

Over residues 1-19 (MSSSIVLSNNNSNSNSMSM) the composition is skewed to low complexity. The segment at 1–34 (MSSSIVLSNNNSNSNSMSMIGQSPPCCSDVPNTP) is disordered.

The protein belongs to the ODC antizyme family. Interacts with ODC1 and thereby sterically blocks ODC homodimerization.

Functionally, ornithine decarboxylase (ODC) antizyme protein that negatively regulates ODC activity and intracellular polyamine biosynthesis and uptake in response to increased intracellular polyamine levels. Binds to ODC monomers, inhibiting the assembly of the functional ODC homodimer, and targets the monomers for ubiquitin-independent proteolytic destruction by the 26S proteasome. The protein is Ornithine decarboxylase antizyme of Pristionchus pacificus (Parasitic nematode).